The following is an 80-amino-acid chain: Mitotic-spindle organizing protein 1 (80 aa).

It belongs to the MOZART1 family. In terms of assembly, part of the gamma-tubulin complex.

The protein localises to the cytoplasm. Its subcellular location is the cytoskeleton. It localises to the microtubule organizing center. It is found in the spindle pole body. In terms of biological role, required for gamma-tubulin complex recruitment to the microtubule organizing center (MTOC). The sequence is that of Mitotic-spindle organizing protein 1 from Pyricularia oryzae (strain 70-15 / ATCC MYA-4617 / FGSC 8958) (Rice blast fungus).